A 258-amino-acid polypeptide reads, in one-letter code: Phosphate import ATP-binding protein PstB (258 aa).

An ABC transporter domain is found at 5 to 247 (IETKDLDIYY…ERIFSNPKEK (243 aa)). Residue 37-44 (GPSGCGKS) participates in ATP binding.

It belongs to the ABC transporter superfamily. Phosphate importer (TC 3.A.1.7) family. The complex is composed of two ATP-binding proteins (PstB), two transmembrane proteins (PstC and PstA) and a solute-binding protein (PstS).

Its subcellular location is the cell membrane. It carries out the reaction phosphate(out) + ATP + H2O = ADP + 2 phosphate(in) + H(+). Functionally, part of the ABC transporter complex PstSACB involved in phosphate import. Responsible for energy coupling to the transport system. This chain is Phosphate import ATP-binding protein PstB, found in Cutibacterium acnes (strain DSM 16379 / KPA171202) (Propionibacterium acnes).